Here is a 208-residue protein sequence, read N- to C-terminus: Inosine triphosphate pyrophosphatase (208 aa).

An N-acetylalanine modification is found at Ala-2. 14-19 serves as a coordination point for ITP; it reads TGNAKK. Glu-44 is a Mg(2+) binding site. ITP is bound by residues Lys-56, 72 to 73, Lys-89, 149 to 152, Lys-172, and 177 to 178; these read DT, FGWD, and HR.

Belongs to the HAM1 NTPase family. As to quaternary structure, homodimer. It depends on Mg(2+) as a cofactor. Mn(2+) serves as cofactor.

It is found in the cytoplasm. The enzyme catalyses ITP + H2O = IMP + diphosphate + H(+). The catalysed reaction is dITP + H2O = dIMP + diphosphate + H(+). It carries out the reaction XTP + H2O = XMP + diphosphate + H(+). It catalyses the reaction N(6)-hydroxy-dATP + H2O = N(6)-hydroxy-dAMP + diphosphate + H(+). Its function is as follows. Pyrophosphatase that hydrolyzes the non-canonical purine nucleotides inosine triphosphate (ITP), deoxyinosine triphosphate (dITP) as well as 2'-deoxy-N-6-hydroxylaminopurine triphosphate (dHAPTP) and xanthosine 5'-triphosphate (XTP) to their respective monophosphate derivatives. The enzyme does not distinguish between the deoxy- and ribose forms. Probably excludes non-canonical purines from RNA and DNA precursor pools, thus preventing their incorporation into RNA and DNA and avoiding chromosomal lesions. This is Inosine triphosphate pyrophosphatase from Bos taurus (Bovine).